The primary structure comprises 352 residues: Selenide, water dikinase (352 aa).

C23 is an active-site residue. ATP contacts are provided by residues K26 and 54 to 56; that span reads SRD. D57 lines the Mg(2+) pocket. ATP is bound by residues D74, D97, and 145–147; that span reads GHS. D97 contributes to the Mg(2+) binding site. D233 contacts Mg(2+).

Belongs to the selenophosphate synthase 1 family. Class I subfamily. Homodimer. Mg(2+) serves as cofactor.

It carries out the reaction hydrogenselenide + ATP + H2O = selenophosphate + AMP + phosphate + 2 H(+). Its function is as follows. Synthesizes selenophosphate from selenide and ATP. The polypeptide is Selenide, water dikinase (Shewanella sp. (strain MR-4)).